A 514-amino-acid polypeptide reads, in one-letter code: ATP synthase subunit alpha (514 aa).

Position 170-177 (170-177 (GDRQIGKT)) interacts with ATP.

This sequence belongs to the ATPase alpha/beta chains family. In terms of assembly, F-type ATPases have 2 components, CF(1) - the catalytic core - and CF(0) - the membrane proton channel. CF(1) has five subunits: alpha(3), beta(3), gamma(1), delta(1), epsilon(1). CF(0) has three main subunits: a(1), b(2) and c(9-12). The alpha and beta chains form an alternating ring which encloses part of the gamma chain. CF(1) is attached to CF(0) by a central stalk formed by the gamma and epsilon chains, while a peripheral stalk is formed by the delta and b chains.

The protein resides in the cell inner membrane. It catalyses the reaction ATP + H2O + 4 H(+)(in) = ADP + phosphate + 5 H(+)(out). Produces ATP from ADP in the presence of a proton gradient across the membrane. The alpha chain is a regulatory subunit. This chain is ATP synthase subunit alpha, found in Stutzerimonas stutzeri (strain A1501) (Pseudomonas stutzeri).